The primary structure comprises 94 residues: Large ribosomal subunit protein uL23 (94 aa).

This sequence belongs to the universal ribosomal protein uL23 family. In terms of assembly, part of the 50S ribosomal subunit. Contacts protein L29, and trigger factor when it is bound to the ribosome.

Functionally, one of the early assembly proteins it binds 23S rRNA. One of the proteins that surrounds the polypeptide exit tunnel on the outside of the ribosome. Forms the main docking site for trigger factor binding to the ribosome. In Mycoplasma mycoides subsp. mycoides SC (strain CCUG 32753 / NCTC 10114 / PG1), this protein is Large ribosomal subunit protein uL23.